We begin with the raw amino-acid sequence, 438 residues long: 3-phosphoshikimate 1-carboxyvinyltransferase (438 aa).

3-phosphoshikimate contacts are provided by K26, S27, and R31. Residue K26 coordinates phosphoenolpyruvate. The phosphoenolpyruvate site is built by G99 and R127. The 3-phosphoshikimate site is built by S170, S171, Q172, S199, E314, and H343. Position 172 (Q172) interacts with phosphoenolpyruvate. E314 functions as the Proton acceptor in the catalytic mechanism. 3 residues coordinate phosphoenolpyruvate: R347, R388, and K413.

This sequence belongs to the EPSP synthase family. Monomer.

The protein localises to the cytoplasm. The catalysed reaction is 3-phosphoshikimate + phosphoenolpyruvate = 5-O-(1-carboxyvinyl)-3-phosphoshikimate + phosphate. It participates in metabolic intermediate biosynthesis; chorismate biosynthesis; chorismate from D-erythrose 4-phosphate and phosphoenolpyruvate: step 6/7. In terms of biological role, catalyzes the transfer of the enolpyruvyl moiety of phosphoenolpyruvate (PEP) to the 5-hydroxyl of shikimate-3-phosphate (S3P) to produce enolpyruvyl shikimate-3-phosphate and inorganic phosphate. This chain is 3-phosphoshikimate 1-carboxyvinyltransferase, found in Mycobacterium sp. (strain MCS).